The sequence spans 306 residues: UDP-3-O-acyl-N-acetylglucosamine deacetylase (306 aa).

Positions 79, 238, and 242 each coordinate Zn(2+). Residue His265 is the Proton donor of the active site.

It belongs to the LpxC family. The cofactor is Zn(2+).

It carries out the reaction a UDP-3-O-[(3R)-3-hydroxyacyl]-N-acetyl-alpha-D-glucosamine + H2O = a UDP-3-O-[(3R)-3-hydroxyacyl]-alpha-D-glucosamine + acetate. Its pathway is glycolipid biosynthesis; lipid IV(A) biosynthesis; lipid IV(A) from (3R)-3-hydroxytetradecanoyl-[acyl-carrier-protein] and UDP-N-acetyl-alpha-D-glucosamine: step 2/6. Functionally, catalyzes the hydrolysis of UDP-3-O-myristoyl-N-acetylglucosamine to form UDP-3-O-myristoylglucosamine and acetate, the committed step in lipid A biosynthesis. In Idiomarina loihiensis (strain ATCC BAA-735 / DSM 15497 / L2-TR), this protein is UDP-3-O-acyl-N-acetylglucosamine deacetylase.